The following is a 353-amino-acid chain: Melanin-concentrating hormone receptor 1 (353 aa).

The disordered stretch occupies residues 1 to 26 (MDLQTSLLSTGPNASNISDGQDNLTL). Topologically, residues 1–45 (MDLQTSLLSTGPNASNISDGQDNLTLPGSPPRTGSVSYINIIMPS) are extracellular. Residues Asn-13, Asn-16, and Asn-23 are each glycosylated (N-linked (GlcNAc...) asparagine). A helical membrane pass occupies residues 46–66 (VFGTICLLGIVGNSTVIFAVV). Topologically, residues 67–79 (KKSKLHWCSNVPD) are cytoplasmic. Residues 80–100 (IFIINLSVVDLLFLLGMPFMI) traverse the membrane as a helical segment. Over 101–116 (HQLMGNGVWHFGETMC) the chain is Extracellular. Cysteines 116 and 194 form a disulfide. A helical membrane pass occupies residues 117-139 (TLITAMDANSQFTSTYILTAMTI). The Cytoplasmic segment spans residues 140–161 (DRYLATVHPISSTKFRKPSMAT). A helical membrane pass occupies residues 162–182 (LVICLLWALSFISITPVWLYA). At 183–204 (RLIPFPGGAVGCGIRLPNPDTD) the chain is on the extracellular side. Residues 205–225 (LYWFTLYQFFLAFALPFVVIT) traverse the membrane as a helical segment. Residues 226 to 256 (AAYVKILQRMTSSVAPASQRSIRLRTKRVTR) lie on the Cytoplasmic side of the membrane. Residues 257-277 (TAIAICLVFFVCWAPYYVLQL) traverse the membrane as a helical segment. Over 278–294 (TQLSISRPTLTFVYLYN) the chain is Extracellular. Residues 295–315 (AAISLGYANSCLNPFVYIVLC) traverse the membrane as a helical segment. The Cytoplasmic segment spans residues 316-353 (ETFRKRLVLSVKPAAQGQLRTVSNAQTADEERTESKGT).

The protein belongs to the G-protein coupled receptor 1 family. Interacts with NCDN. As to expression, high level in the brain, moderate amounts in the eye and skeletal muscle, and small amounts in tongue and pituitary.

It is found in the cell membrane. Functionally, receptor for melanin-concentrating hormone, coupled to G proteins that inhibit adenylyl cyclase. The chain is Melanin-concentrating hormone receptor 1 from Rattus norvegicus (Rat).